A 158-amino-acid chain; its full sequence is Cyclic pyranopterin monophosphate synthase (158 aa).

Substrate-binding positions include L76 to H78 and M114 to E115. Residue D129 is part of the active site.

The protein belongs to the MoaC family. As to quaternary structure, homohexamer; trimer of dimers.

The enzyme catalyses (8S)-3',8-cyclo-7,8-dihydroguanosine 5'-triphosphate = cyclic pyranopterin phosphate + diphosphate. Its pathway is cofactor biosynthesis; molybdopterin biosynthesis. Its function is as follows. Catalyzes the conversion of (8S)-3',8-cyclo-7,8-dihydroguanosine 5'-triphosphate to cyclic pyranopterin monophosphate (cPMP). The chain is Cyclic pyranopterin monophosphate synthase from Shewanella halifaxensis (strain HAW-EB4).